The sequence spans 921 residues: Probable dipeptidyl-aminopeptidase B (921 aa).

The disordered stretch occupies residues 1–87; it reads MDAPATASRQ…EADTNDLETG (87 aa). At 1–108 the chain is on the cytoplasmic side; that stretch reads MDAPATASRQ…RVGVDRGLKK (108 aa). Over residues 22 to 33 the composition is skewed to low complexity; it reads SSLSTVSTTSLV. Basic and acidic residues predominate over residues 35-45; that stretch reads DRLHEHNEKSY. Acidic residues predominate over residues 66-75; sequence PDDDDDDDES. The chain crosses the membrane as a helical; Signal-anchor for type II membrane protein span at residues 109–129; that stretch reads VILILAAAFLFAWGAALFVFL. The Vacuolar segment spans residues 130 to 921; it reads SNKSYKHAST…KPIVEPKARV (792 aa). N-linked (GlcNAc...) asparagine glycans are attached at residues Asn131, Asn364, and Asn577. Residue Ser768 is the Charge relay system of the active site. A glycan (N-linked (GlcNAc...) asparagine) is linked at Asn827. Residues Asp845 and His878 each act as charge relay system in the active site.

It belongs to the peptidase S9B family.

The protein localises to the vacuole membrane. The catalysed reaction is Release of an N-terminal dipeptide, Xaa-Yaa-|-Zaa-, from a polypeptide, preferentially when Yaa is Pro, provided Zaa is neither Pro nor hydroxyproline.. Type IV dipeptidyl-peptidase which removes N-terminal dipeptides sequentially from polypeptides having unsubstituted N-termini provided that the penultimate residue is proline. The protein is Probable dipeptidyl-aminopeptidase B (DAPB) of Colletotrichum graminicola (strain M1.001 / M2 / FGSC 10212) (Maize anthracnose fungus).